Here is a 196-residue protein sequence, read N- to C-terminus: Somatotropin (196 aa).

An N-terminal signal peptide occupies residues 1–16 (MDKVILVLLMSLGASS). A Pyrrolidone carboxylic acid modification is found at Gln-17. His-35 contributes to the Zn(2+) binding site. Cys-67 and Cys-169 are joined by a disulfide. Glu-178 lines the Zn(2+) pocket. Residues Cys-186 and Cys-194 are joined by a disulfide bond.

It belongs to the somatotropin/prolactin family.

The protein localises to the secreted. Functionally, growth hormone plays an important role in growth control and is involved in the regulation of several anabolic processes. Implicated as an osmoregulatory substance important for seawater adaptation. In Takifugu rubripes (Japanese pufferfish), this protein is Somatotropin (gh).